We begin with the raw amino-acid sequence, 1051 residues long: Anucleate primary sterigmata protein B (1051 aa).

Coiled coils occupy residues 10–200 (IDRL…YAIA) and 239–285 (STLV…ELKL). Positions 58–90 (KDNQGLKRKIRDLEKQLKDQQSDKESMLNHDPE) are enriched in basic and acidic residues. Disordered regions lie at residues 58-100 (KDNQ…DRDH) and 141-160 (LKSL…REER). Residues 294 to 303 (AGDSILDRSA) are compositionally biased toward basic and acidic residues. Disordered regions lie at residues 294-329 (AGDS…AERE), 877-902 (NHPR…LAER), 909-928 (NTAA…QMTN), and 984-1051 (EERD…DIEV). Polar residues predominate over residues 309–321 (RPSSSISDRTGQS). Coiled coils occupy residues 325 to 743 (DAER…RNSM) and 787 to 878 (RNLL…LQNH). Polar residues-rich tracts occupy residues 877 to 897 (NHPR…SSTI) and 916 to 928 (ARSS…QMTN). The stretch at 950 to 1004 (NQEVWIKRLHELERRLKAEREARLLDRNGARRRLEERDAENKRLRAQLDRQRLRQ) forms a coiled coil. Basic and acidic residues-rich tracts occupy residues 984–1001 (EERD…DRQR) and 1028–1040 (EGYR…HSSS).

It localises to the cytoplasm. Involved in regulation of nuclear migration. May be involved in regulating nuclear positioning. This chain is Anucleate primary sterigmata protein B (apsB), found in Emericella nidulans (strain FGSC A4 / ATCC 38163 / CBS 112.46 / NRRL 194 / M139) (Aspergillus nidulans).